The following is a 107-amino-acid chain: Small ribosomal subunit protein uS10m (107 aa).

It belongs to the universal ribosomal protein uS10 family.

It is found in the mitochondrion. This chain is Small ribosomal subunit protein uS10m (RPS10), found in Prototheca wickerhamii.